The primary structure comprises 360 residues: G-protein coupled receptor 15 (360 aa).

The Extracellular portion of the chain corresponds to 1–33 (MDPEETSVYLDYYYATSPNPDIRETHSHVPYTS). A helical transmembrane segment spans residues 34-54 (VFLPVFYTAVFLTGVLGNLVL). Residues 55 to 69 (MGALHFKPGSRRLID) lie on the Cytoplasmic side of the membrane. The helical transmembrane segment at 70–90 (IFIINLAASDFIFLVTLPLWV) threads the bilayer. The Extracellular segment spans residues 91–120 (DKEASLGLWRTGSFLCKGSSYMISVNMHCS). A helical transmembrane segment spans residues 121-141 (VFLLTCMSVDRYLAIVCPVVS). Residues 142 to 149 (RKFRRTDC) are Cytoplasmic-facing. A helical transmembrane segment spans residues 150–170 (AYVVCASIWFISCLLGLPTLL). Residues 171–192 (SRELTLIDDKPYCAEKKATPLK) lie on the Extracellular side of the membrane. Residues 193 to 213 (LIWSLVALIFTFFVPLLSIVT) form a helical membrane-spanning segment. Residues 214 to 239 (CYCCIARKLCAHYQQSGKHNKKLKKS) are Cytoplasmic-facing. A helical membrane pass occupies residues 240–260 (IKIIFIVVAAFLVSWLPFNTS). Residues 261–284 (KLLAIVSGLQQERYFPSAILQLGM) lie on the Extracellular side of the membrane. Residues 285–305 (EVSGPLAFANSCVNPFIYYIF) form a helical membrane-spanning segment. Residues 306–360 (DSYIRRAIVHCLCPCLKNYDFGSSTETSDSHLTKALSTFIHAEDFTRRRKRSVSL) are Cytoplasmic-facing. S359 bears the Phosphoserine mark.

This sequence belongs to the G-protein coupled receptor 1 family. As to quaternary structure, interacts with adapter YWHAE; this interaction promotes ER-to-Golgi transport of GPR15. Phosphorylation is necessary for YWHAE binding and efficient surface expression. Post-translationally, O-glycosylated. Sialylated O-glycans in the N-terminal tail inhibits binding of GPR15LG. In terms of processing, sulfation is required for efficient binding of GPR15LG.

It localises to the cell membrane. In terms of biological role, g protein-coupled receptor that plays an important role in immune homeostasis. Acts via its natural ligand GPR15LG, a chemokine-like polypeptide strongly expressed in gastrointestinal tissues. GPR15-GPR15LG signaling axis regulates intestinal homeostasis and inflammation through the migration of immune cells. Controls thereby the specific homing of T-cells, particularly FOXP3+ regulatory T-cells (Tregs), to the large intestine lamina propria. Also required for skin localization of thymus-derived dendritic epidermal T-cells. Plays an important role in mediating cytoprotective function as well as angiogenesis of thrombomodulin. Mechanistically, preferentially signals through the Gi/o pathway to inhibit adenylate cyclase activity and activate a phosphatidylinositol-calcium second messenger system that regulates the release of Ca(2+) ions from intracellular stores. This is G-protein coupled receptor 15 (GPR15) from Macaca nemestrina (Pig-tailed macaque).